The chain runs to 491 residues: Cytochrome P450 2B4 (491 aa).

At S128 the chain carries Phosphoserine; by PKA. C436 lines the heme pocket.

The protein belongs to the cytochrome P450 family. Heme serves as cofactor.

It is found in the endoplasmic reticulum membrane. Its subcellular location is the microsome membrane. It carries out the reaction an organic molecule + reduced [NADPH--hemoprotein reductase] + O2 = an alcohol + oxidized [NADPH--hemoprotein reductase] + H2O + H(+). Its function is as follows. Cytochromes P450 are a group of heme-thiolate monooxygenases. In liver microsomes, this enzyme is involved in an NADPH-dependent electron transport pathway. It oxidizes a variety of structurally unrelated compounds, including steroids, fatty acids, and xenobiotics. In the epoxidation of arachidonic acid it has a unique preference for the 5,6-olefin. The protein is Cytochrome P450 2B4 (CYP2B4) of Oryctolagus cuniculus (Rabbit).